A 137-amino-acid polypeptide reads, in one-letter code: Prostate and testis expressed protein 13 (137 aa).

The first 20 residues, 1–20 (MFQKLLLSVFIILLMDVGER), serve as a signal peptide directing secretion. A UPAR/Ly6 domain is found at 28–114 (RHCNLCSHYD…CIDRNYCNDG (87 aa)). Intrachain disulfides connect Cys30–Cys60, Cys33–Cys41, Cys48–Cys84, Cys87–Cys104, and Cys105–Cys111. A glycan (N-linked (GlcNAc...) asparagine) is linked at Asn57.

This sequence belongs to the PATE family. In terms of tissue distribution, strongly expressed in the epididymis, including the initial segment, caput, corpus and cauda regions. Weakly expressed in prostate.

It is found in the secreted. The polypeptide is Prostate and testis expressed protein 13 (Mus musculus (Mouse)).